The chain runs to 502 residues: ATP synthase subunit alpha (502 aa).

ATP is bound at residue 169 to 176 (GDRQTGKT).

The protein belongs to the ATPase alpha/beta chains family. F-type ATPases have 2 components, CF(1) - the catalytic core - and CF(0) - the membrane proton channel. CF(1) has five subunits: alpha(3), beta(3), gamma(1), delta(1), epsilon(1). CF(0) has three main subunits: a(1), b(2) and c(9-12). The alpha and beta chains form an alternating ring which encloses part of the gamma chain. CF(1) is attached to CF(0) by a central stalk formed by the gamma and epsilon chains, while a peripheral stalk is formed by the delta and b chains.

It is found in the cell membrane. It carries out the reaction ATP + H2O + 4 H(+)(in) = ADP + phosphate + 5 H(+)(out). In terms of biological role, produces ATP from ADP in the presence of a proton gradient across the membrane. The alpha chain is a regulatory subunit. This Staphylococcus aureus (strain COL) protein is ATP synthase subunit alpha.